The primary structure comprises 405 residues: Glucose-1-phosphate adenylyltransferase (405 aa).

Alpha-D-glucose 1-phosphate is bound by residues tyrosine 99, glycine 164, 179–180 (EK), and serine 197.

This sequence belongs to the bacterial/plant glucose-1-phosphate adenylyltransferase family. Homotetramer.

The enzyme catalyses alpha-D-glucose 1-phosphate + ATP + H(+) = ADP-alpha-D-glucose + diphosphate. Its pathway is glycan biosynthesis; glycogen biosynthesis. Involved in the biosynthesis of ADP-glucose, a building block required for the elongation reactions to produce glycogen. Catalyzes the reaction between ATP and alpha-D-glucose 1-phosphate (G1P) to produce pyrophosphate and ADP-Glc. The polypeptide is Glucose-1-phosphate adenylyltransferase (Corynebacterium aurimucosum (strain ATCC 700975 / DSM 44827 / CIP 107346 / CN-1) (Corynebacterium nigricans)).